Consider the following 378-residue polypeptide: Ribosomal RNA large subunit methyltransferase G (378 aa).

Belongs to the methyltransferase superfamily. RlmG family.

The protein resides in the cytoplasm. It carries out the reaction guanosine(1835) in 23S rRNA + S-adenosyl-L-methionine = N(2)-methylguanosine(1835) in 23S rRNA + S-adenosyl-L-homocysteine + H(+). Specifically methylates the guanine in position 1835 (m2G1835) of 23S rRNA. In Escherichia coli O139:H28 (strain E24377A / ETEC), this protein is Ribosomal RNA large subunit methyltransferase G.